The chain runs to 194 residues: Outer-membrane lipoprotein LolB (194 aa).

The N-terminal stretch at methionine 1–glycine 18 is a signal peptide. Cysteine 19 carries the N-palmitoyl cysteine lipid modification. Cysteine 19 carries the S-diacylglycerol cysteine lipid modification.

Belongs to the LolB family. As to quaternary structure, monomer.

Its subcellular location is the cell outer membrane. Its function is as follows. Plays a critical role in the incorporation of lipoproteins in the outer membrane after they are released by the LolA protein. In Aeromonas hydrophila subsp. hydrophila (strain ATCC 7966 / DSM 30187 / BCRC 13018 / CCUG 14551 / JCM 1027 / KCTC 2358 / NCIMB 9240 / NCTC 8049), this protein is Outer-membrane lipoprotein LolB.